Reading from the N-terminus, the 342-residue chain is Transcription initiation factor TFIID subunit 12 (342 aa).

The disordered stretch occupies residues methionine 1–alanine 221. Polar residues predominate over residues proline 12–glutamine 35. Composition is skewed to low complexity over residues proline 39 to proline 59, proline 67 to alanine 89, glutamine 96 to glycine 146, and glutamine 180 to glutamine 192. Residues glutamine 193–methionine 218 are compositionally biased toward pro residues. The Histone-fold domain occupies glutamate 230–methionine 297.

The protein belongs to the TAF12 family. As to quaternary structure, interacts (via histone-fold domain) with taf-4 (via the histone-fold domain). Interaction may facilitate the nuclear localization of taf-4.

It is found in the nucleus. Its function is as follows. Part of the general transcription factor complex TFIID. Plays a role in recruiting taf-4 to the nucleus and thereby activating transcription initiation by RNA polymerase II, as part of the TFIID complex. The polypeptide is Transcription initiation factor TFIID subunit 12 (Caenorhabditis elegans).